Reading from the N-terminus, the 239-residue chain is Serine protease SplC (239 aa).

A signal peptide spans 1–36 (MNKNIVIKSMAALAILTSVTGINAAVVEETQQIANA). Residues H75, D113, and S193 each act as charge relay system in the active site.

Belongs to the peptidase S1B family.

The protein resides in the secreted. This chain is Serine protease SplC (splC), found in Staphylococcus aureus (strain MW2).